A 572-amino-acid chain; its full sequence is Sulfate adenylyltransferase (572 aa).

The tract at residues 1-169 is N-terminal; sequence MANTPHGGVL…IQAINKLNHY (169 aa). The segment at 170 to 394 is catalytic; that stretch reads DYVGLRYTPA…LRESHPPRAK (225 aa). Glutamine 197 is a sulfate binding site. ATP is bound by residues 197 to 200 and 291 to 294; these read QTRN and GRDH. Residues threonine 198, arginine 199, and asparagine 200 contribute to the active site. Arginine 199 provides a ligand contact to sulfate. Alanine 295 serves as a coordination point for sulfate. Methionine 333 provides a ligand contact to ATP. The segment at 395 to 572 is allosteric regulation domain; adenylyl-sulfate kinase-like; that stretch reads QGFTIFLTGH…LLESQGFFGN (178 aa). Residues 434 to 437, arginine 451, 477 to 478, and lysine 515 each bind 3'-phosphoadenylyl sulfate; these read ETVR and IA.

It in the N-terminal section; belongs to the sulfate adenylyltransferase family. The protein in the C-terminal section; belongs to the APS kinase family. Homohexamer. Dimer of trimers.

It is found in the cytoplasm. It catalyses the reaction sulfate + ATP + H(+) = adenosine 5'-phosphosulfate + diphosphate. The protein operates within sulfur metabolism; hydrogen sulfide biosynthesis; sulfite from sulfate: step 1/3. Its activity is regulated as follows. Allosterically inhibited by 3'-phosphoadenosine 5'-phosphosulfate (PAPS). Catalyzes the first intracellular reaction of sulfate assimilation, forming adenosine-5'-phosphosulfate (APS) from inorganic sulfate and ATP. Plays an important role in sulfate activation as a component of the biosynthesis pathway of sulfur-containing amino acids. The polypeptide is Sulfate adenylyltransferase (Yarrowia lipolytica (strain CLIB 122 / E 150) (Yeast)).